Reading from the N-terminus, the 639-residue chain is MAU2 chromatid cohesion factor homolog (639 aa).

TPR repeat units lie at residues 453-486 and 493-526; these read GGFYYVQGLHAFHKNSFHEAKRFLRETLKMANAE and SCSLVLLSHVFLSIGNSKESMNMVTPAMQLASKI.

The protein belongs to the SCC4/mau-2 family. In terms of assembly, interacts with Nipped-B to form the cohesin loading complex.

The protein localises to the nucleus. The protein resides in the nucleoplasm. Functionally, required for association of the cohesin complex with chromatin during interphase. Plays a role in sister chromatid cohesion and normal progression through prometaphase. The protein is MAU2 chromatid cohesion factor homolog of Drosophila ananassae (Fruit fly).